We begin with the raw amino-acid sequence, 375 residues long: Chaperone protein DnaJ (375 aa).

The 65-residue stretch at 5–69 folds into the J domain; sequence DYYEILGIDK…QKRAQYDQFG (65 aa). A CR-type zinc finger spans residues 131 to 213; that stretch reads GKETDIEIPK…CGGSGTVQKN (83 aa). Zn(2+)-binding residues include cysteine 144, cysteine 147, cysteine 161, cysteine 164, cysteine 187, cysteine 190, cysteine 201, and cysteine 204. CXXCXGXG motif repeat units follow at residues 144–151, 161–168, 187–194, and 201–208; these read CDTCNGSG, CSHCHGSG, CNYCQGTG, and CNTCGGSG.

Belongs to the DnaJ family. In terms of assembly, homodimer. Zn(2+) serves as cofactor.

The protein localises to the cytoplasm. In terms of biological role, participates actively in the response to hyperosmotic and heat shock by preventing the aggregation of stress-denatured proteins and by disaggregating proteins, also in an autonomous, DnaK-independent fashion. Unfolded proteins bind initially to DnaJ; upon interaction with the DnaJ-bound protein, DnaK hydrolyzes its bound ATP, resulting in the formation of a stable complex. GrpE releases ADP from DnaK; ATP binding to DnaK triggers the release of the substrate protein, thus completing the reaction cycle. Several rounds of ATP-dependent interactions between DnaJ, DnaK and GrpE are required for fully efficient folding. Also involved, together with DnaK and GrpE, in the DNA replication of plasmids through activation of initiation proteins. This Oceanobacillus iheyensis (strain DSM 14371 / CIP 107618 / JCM 11309 / KCTC 3954 / HTE831) protein is Chaperone protein DnaJ.